The sequence spans 376 residues: PqqA peptide cyclase (376 aa).

In terms of domain architecture, Radical SAM core spans 4–219 (VPPPLSVLLE…VETARRSLGD (216 aa)). C18, C22, and C25 together coordinate [4Fe-4S] cluster.

The protein belongs to the radical SAM superfamily. PqqE family. Interacts with PqqD. The interaction is necessary for activity of PqqE. [4Fe-4S] cluster serves as cofactor.

The catalysed reaction is [PQQ precursor protein] + S-adenosyl-L-methionine = E-Y cross-linked-[PQQ precursor protein] + 5'-deoxyadenosine + L-methionine + H(+). It functions in the pathway cofactor biosynthesis; pyrroloquinoline quinone biosynthesis. Catalyzes the cross-linking of a glutamate residue and a tyrosine residue in the PqqA protein as part of the biosynthesis of pyrroloquinoline quinone (PQQ). The sequence is that of PqqA peptide cyclase from Xanthomonas campestris pv. campestris (strain B100).